The sequence spans 137 residues: Large ribosomal subunit protein uL16 (137 aa).

The protein belongs to the universal ribosomal protein uL16 family. Part of the 50S ribosomal subunit.

Its function is as follows. Binds 23S rRNA and is also seen to make contacts with the A and possibly P site tRNAs. This chain is Large ribosomal subunit protein uL16, found in Rhodopseudomonas palustris (strain HaA2).